A 279-amino-acid chain; its full sequence is Probable endonuclease 4 (279 aa).

Zn(2+) is bound by residues His-68, His-108, Glu-143, Asp-177, His-180, His-214, Asp-227, His-229, and Glu-259.

The protein belongs to the AP endonuclease 2 family. It depends on Zn(2+) as a cofactor.

It carries out the reaction Endonucleolytic cleavage to 5'-phosphooligonucleotide end-products.. In terms of biological role, endonuclease IV plays a role in DNA repair. It cleaves phosphodiester bonds at apurinic or apyrimidinic (AP) sites, generating a 3'-hydroxyl group and a 5'-terminal sugar phosphate. This chain is Probable endonuclease 4, found in Nitrosopumilus maritimus (strain SCM1).